The following is a 155-amino-acid chain: Transcription antitermination protein NusB (155 aa).

Belongs to the NusB family.

In terms of biological role, involved in transcription antitermination. Required for transcription of ribosomal RNA (rRNA) genes. Binds specifically to the boxA antiterminator sequence of the ribosomal RNA (rrn) operons. This Ralstonia nicotianae (strain ATCC BAA-1114 / GMI1000) (Ralstonia solanacearum) protein is Transcription antitermination protein NusB.